Reading from the N-terminus, the 152-residue chain is Siroheme decarboxylase NirD subunit (152 aa).

This sequence belongs to the Ahb/Nir family. Probably forms a complex composed of NirD, NirL, NirG and NirH. All proteins are required for the total conversion of siroheme to didecarboxysiroheme.

The catalysed reaction is siroheme + 2 H(+) = 12,18-didecarboxysiroheme + 2 CO2. The protein operates within porphyrin-containing compound metabolism. Its function is as follows. Involved in heme d1 biosynthesis. Catalyzes the decarboxylation of siroheme into didecarboxysiroheme. In Stutzerimonas stutzeri (Pseudomonas stutzeri), this protein is Siroheme decarboxylase NirD subunit.